The primary structure comprises 729 residues: Beta-galactosidase 4 (729 aa).

Positions 1-35 (MAPAPTPAAAAGRRVAVLAAALVAASLAASVGVAN) are cleaved as a signal peptide. The active-site Proton donor is Glu-194. Glu-263 acts as the Nucleophile in catalysis.

It belongs to the glycosyl hydrolase 35 family.

The protein resides in the secreted. Its subcellular location is the extracellular space. It localises to the apoplast. It carries out the reaction Hydrolysis of terminal non-reducing beta-D-galactose residues in beta-D-galactosides.. The sequence is that of Beta-galactosidase 4 from Oryza sativa subsp. japonica (Rice).